We begin with the raw amino-acid sequence, 113 residues long: Ribonuclease P protein component (113 aa).

This sequence belongs to the RnpA family. As to quaternary structure, consists of a catalytic RNA component (M1 or rnpB) and a protein subunit.

It carries out the reaction Endonucleolytic cleavage of RNA, removing 5'-extranucleotides from tRNA precursor.. In terms of biological role, RNaseP catalyzes the removal of the 5'-leader sequence from pre-tRNA to produce the mature 5'-terminus. It can also cleave other RNA substrates such as 4.5S RNA. The protein component plays an auxiliary but essential role in vivo by binding to the 5'-leader sequence and broadening the substrate specificity of the ribozyme. This is Ribonuclease P protein component from Finegoldia magna (strain ATCC 29328 / DSM 20472 / WAL 2508) (Peptostreptococcus magnus).